Reading from the N-terminus, the 171-residue chain is NADH-quinone oxidoreductase subunit I (171 aa).

4Fe-4S ferredoxin-type domains follow at residues 41 to 71 (LTRD…VVKT) and 81 to 110 (ESFT…LTPD). Positions 51, 54, 57, 61, 90, 93, 96, and 100 each coordinate [4Fe-4S] cluster.

This sequence belongs to the complex I 23 kDa subunit family. In terms of assembly, NDH-1 is composed of 13 different subunits. Subunits NuoA, H, J, K, L, M, N constitute the membrane sector of the complex. [4Fe-4S] cluster is required as a cofactor.

It localises to the cell inner membrane. It catalyses the reaction a quinone + NADH + 5 H(+)(in) = a quinol + NAD(+) + 4 H(+)(out). In terms of biological role, NDH-1 shuttles electrons from NADH, via FMN and iron-sulfur (Fe-S) centers, to quinones in the respiratory chain. The immediate electron acceptor for the enzyme in this species is believed to be ubiquinone. Couples the redox reaction to proton translocation (for every two electrons transferred, four hydrogen ions are translocated across the cytoplasmic membrane), and thus conserves the redox energy in a proton gradient. The chain is NADH-quinone oxidoreductase subunit I from Shewanella woodyi (strain ATCC 51908 / MS32).